The primary structure comprises 242 residues: Probable transcriptional regulatory protein PG_0097 (242 aa).

Belongs to the TACO1 family.

The protein localises to the cytoplasm. The sequence is that of Probable transcriptional regulatory protein PG_0097 from Porphyromonas gingivalis (strain ATCC BAA-308 / W83).